The primary structure comprises 334 residues: Holliday junction branch migration complex subunit RuvB (334 aa).

The segment at A4–Y184 is large ATPase domain (RuvB-L). ATP-binding positions include I23, R24, G65, K68, T69, T70, E131–Y133, R174, Y184, and R221. Mg(2+) is bound at residue T69. The small ATPAse domain (RuvB-S) stretch occupies residues S185–N255. The interval L258 to E334 is head domain (RuvB-H). DNA contacts are provided by R313 and R318.

Belongs to the RuvB family. Homohexamer. Forms an RuvA(8)-RuvB(12)-Holliday junction (HJ) complex. HJ DNA is sandwiched between 2 RuvA tetramers; dsDNA enters through RuvA and exits via RuvB. An RuvB hexamer assembles on each DNA strand where it exits the tetramer. Each RuvB hexamer is contacted by two RuvA subunits (via domain III) on 2 adjacent RuvB subunits; this complex drives branch migration. In the full resolvosome a probable DNA-RuvA(4)-RuvB(12)-RuvC(2) complex forms which resolves the HJ.

Its subcellular location is the cytoplasm. It catalyses the reaction ATP + H2O = ADP + phosphate + H(+). Its function is as follows. The RuvA-RuvB-RuvC complex processes Holliday junction (HJ) DNA during genetic recombination and DNA repair, while the RuvA-RuvB complex plays an important role in the rescue of blocked DNA replication forks via replication fork reversal (RFR). RuvA specifically binds to HJ cruciform DNA, conferring on it an open structure. The RuvB hexamer acts as an ATP-dependent pump, pulling dsDNA into and through the RuvAB complex. RuvB forms 2 homohexamers on either side of HJ DNA bound by 1 or 2 RuvA tetramers; 4 subunits per hexamer contact DNA at a time. Coordinated motions by a converter formed by DNA-disengaged RuvB subunits stimulates ATP hydrolysis and nucleotide exchange. Immobilization of the converter enables RuvB to convert the ATP-contained energy into a lever motion, pulling 2 nucleotides of DNA out of the RuvA tetramer per ATP hydrolyzed, thus driving DNA branch migration. The RuvB motors rotate together with the DNA substrate, which together with the progressing nucleotide cycle form the mechanistic basis for DNA recombination by continuous HJ branch migration. Branch migration allows RuvC to scan DNA until it finds its consensus sequence, where it cleaves and resolves cruciform DNA. This is Holliday junction branch migration complex subunit RuvB from Hahella chejuensis (strain KCTC 2396).